Reading from the N-terminus, the 478-residue chain is Aspartyl/glutamyl-tRNA(Asn/Gln) amidotransferase subunit B 2 (478 aa).

Belongs to the GatB/GatE family. GatB subfamily. As to quaternary structure, heterotrimer of A, B and C subunits.

It catalyses the reaction L-glutamyl-tRNA(Gln) + L-glutamine + ATP + H2O = L-glutaminyl-tRNA(Gln) + L-glutamate + ADP + phosphate + H(+). It carries out the reaction L-aspartyl-tRNA(Asn) + L-glutamine + ATP + H2O = L-asparaginyl-tRNA(Asn) + L-glutamate + ADP + phosphate + 2 H(+). Functionally, allows the formation of correctly charged Asn-tRNA(Asn) or Gln-tRNA(Gln) through the transamidation of misacylated Asp-tRNA(Asn) or Glu-tRNA(Gln) in organisms which lack either or both of asparaginyl-tRNA or glutaminyl-tRNA synthetases. The reaction takes place in the presence of glutamine and ATP through an activated phospho-Asp-tRNA(Asn) or phospho-Glu-tRNA(Gln). This Clostridium acetobutylicum (strain ATCC 824 / DSM 792 / JCM 1419 / IAM 19013 / LMG 5710 / NBRC 13948 / NRRL B-527 / VKM B-1787 / 2291 / W) protein is Aspartyl/glutamyl-tRNA(Asn/Gln) amidotransferase subunit B 2 (gatB2).